The following is a 338-amino-acid chain: MNDISSQTPGILATAREQVLQRGEGLSQEQVLEVLNLPDEQIEELLALAHEVRVKWCGEEVEIEGIVSLKTGGCPEDCHFCSQSGLFETPVRSVWLDIPLLVEQAKQTAKTGATEFCIVAAVKGPDENLMRQLEVAVEAIRAEVDINVAASVGILTQEQVDRLTAIGVHRYNHNLETSRSNFPNVVTTHSWEERYETLKMVKESGMEVCCGGILGMGETREQRAEFAAELASLEPHEVPMNFLDPRPGTPFADYPVMAGSEALKTIGAFRLALPRTTLRFAGGRELTLEDFGTEAGLLGGINGMIVGNYLTTLGRDQEADVDMLNRLSLPIKALNRSV.

The region spanning 59–284 is the Radical SAM core domain; the sequence is EEVEIEGIVS…RTTLRFAGGR (226 aa). Residues Cys-74, Cys-78, and Cys-81 each contribute to the [4Fe-4S] cluster site. [2Fe-2S] cluster contacts are provided by Cys-117, Cys-209, and Arg-279.

It belongs to the radical SAM superfamily. Biotin synthase family. Homodimer. [4Fe-4S] cluster is required as a cofactor. [2Fe-2S] cluster serves as cofactor.

It carries out the reaction (4R,5S)-dethiobiotin + (sulfur carrier)-SH + 2 reduced [2Fe-2S]-[ferredoxin] + 2 S-adenosyl-L-methionine = (sulfur carrier)-H + biotin + 2 5'-deoxyadenosine + 2 L-methionine + 2 oxidized [2Fe-2S]-[ferredoxin]. Its pathway is cofactor biosynthesis; biotin biosynthesis; biotin from 7,8-diaminononanoate: step 2/2. Its function is as follows. Catalyzes the conversion of dethiobiotin (DTB) to biotin by the insertion of a sulfur atom into dethiobiotin via a radical-based mechanism. This chain is Biotin synthase, found in Corynebacterium urealyticum (strain ATCC 43042 / DSM 7109).